Here is a 180-residue protein sequence, read N- to C-terminus: UPF0227 protein YcfP (180 aa).

The protein belongs to the UPF0227 family.

The polypeptide is UPF0227 protein YcfP (Salmonella choleraesuis (strain SC-B67)).